A 203-amino-acid polypeptide reads, in one-letter code: Small ribosomal subunit protein uS4 (203 aa).

The region spanning 93-153 (RRFDNVVFRA…PKSKNMSAVS (61 aa)) is the S4 RNA-binding domain.

The protein belongs to the universal ribosomal protein uS4 family. In terms of assembly, part of the 30S ribosomal subunit. Contacts protein S5. The interaction surface between S4 and S5 is involved in control of translational fidelity.

In terms of biological role, one of the primary rRNA binding proteins, it binds directly to 16S rRNA where it nucleates assembly of the body of the 30S subunit. With S5 and S12 plays an important role in translational accuracy. The sequence is that of Small ribosomal subunit protein uS4 from Chlorobium phaeovibrioides (strain DSM 265 / 1930) (Prosthecochloris vibrioformis (strain DSM 265)).